Consider the following 127-residue polypeptide: Fluoride-specific ion channel FluC (127 aa).

A run of 4 helical transmembrane segments spans residues 4–24 (TLLA…QLGV), 35–55 (LGTL…LAFF), 71–91 (TGLC…IMFL), and 103–123 (VLLN…LVTW). Residues G75 and T78 each contribute to the Na(+) site.

This sequence belongs to the fluoride channel Fluc/FEX (TC 1.A.43) family.

It is found in the cell inner membrane. The catalysed reaction is fluoride(in) = fluoride(out). Its activity is regulated as follows. Na(+) is not transported, but it plays an essential structural role and its presence is essential for fluoride channel function. Fluoride-specific ion channel. Important for reducing fluoride concentration in the cell, thus reducing its toxicity. This is Fluoride-specific ion channel FluC from Pectobacterium carotovorum subsp. carotovorum (strain PC1).